The primary structure comprises 647 residues: Phosphatidylinositol polyphosphate 5-phosphatase type IV (647 aa).

Disordered stretches follow at residues 1-80 (MPSK…QPPI), 101-131 (RGSQ…PAYS), and 177-196 (HRDA…HASH). Copy 1 of the repeat occupies 52 to 55 (PMPP). The segment at 52 to 243 (PMPPFSIPAK…AHSNLGPSRP (192 aa)) is 3 X 4 AA repeats of P-X-X-P. Residues 60–75 (AKTSNQNPQTKANLIT) show a composition bias toward polar residues. Residues 76 to 79 (PQPP) form repeat 2. Ser-103 carries the post-translational modification Phosphoserine. The segment covering 120 to 129 (LQDSVAQSPA) has biased composition (polar residues). Position 197 is a phosphothreonine (Thr-197). Copy 3 of the repeat occupies 240–243 (PSRP). Phosphoserine occurs at positions 245 and 259. Cys-644 is modified (cysteine methyl ester). The S-farnesyl cysteine moiety is linked to residue Cys-644. Positions 645 to 647 (TVS) are cleaved as a propeptide — removed in mature form.

It belongs to the inositol polyphosphate 5-phosphatase family. As to quaternary structure, interacts (when prenylated) with PDE6D; this is important for normal location in cilia. As to expression, highly expressed in testis, in pachytene and diplotene spermatocytes, but not in more mature elongating spermatids. Detected in neurons throughout the brain.

It localises to the cytoplasm. Its subcellular location is the cytoskeleton. The protein localises to the cilium axoneme. It is found in the golgi apparatus. The protein resides in the golgi stack membrane. It localises to the cell projection. Its subcellular location is the ruffle. The protein localises to the cell membrane. It is found in the nucleus. The enzyme catalyses a 1,2-diacyl-sn-glycero-3-phospho-(1D-myo-inositol-4,5-bisphosphate) + H2O = a 1,2-diacyl-sn-glycero-3-phospho-(1D-myo-inositol 4-phosphate) + phosphate. It catalyses the reaction a 1,2-diacyl-sn-glycero-3-phospho-(1D-myo-inositol-3,4,5-trisphosphate) + H2O = a 1,2-diacyl-sn-glycero-3-phospho-(1D-myo-inositol-3,4-bisphosphate) + phosphate. It carries out the reaction a 1,2-diacyl-sn-glycero-3-phospho-(1D-myo-inositol-3,5-bisphosphate) + H2O = a 1,2-diacyl-sn-glycero-3-phospho-(1D-myo-inositol-3-phosphate) + phosphate. Functionally, phosphatidylinositol (PtdIns) phosphatase that specifically hydrolyzes the 5-phosphate of phosphatidylinositol-3,4,5-trisphosphate (PtdIns(3,4,5)P3), phosphatidylinositol 4,5-bisphosphate (PtdIns(4,5)P2) and phosphatidylinositol 3,5-bisphosphate (PtdIns(3,5)P2). Specific for lipid substrates, inactive towards water soluble inositol phosphates. Specific for lipid substrates, inactive towards water soluble inositol phosphates. Plays an essential role in the primary cilium by controlling ciliary growth and phosphoinositide 3-kinase (PI3K) signaling and stability. This Mus musculus (Mouse) protein is Phosphatidylinositol polyphosphate 5-phosphatase type IV (Inpp5e).